The chain runs to 389 residues: Putative serine/threonine-protein kinase (389 aa).

The Protein kinase domain maps to 15–356; sequence YRIEKLINRG…LMVSNYLPWY (342 aa). Residue Asp-164 is the Proton acceptor of the active site.

The protein belongs to the protein kinase superfamily. Ser/Thr protein kinase family.

The catalysed reaction is L-seryl-[protein] + ATP = O-phospho-L-seryl-[protein] + ADP + H(+). It catalyses the reaction L-threonyl-[protein] + ATP = O-phospho-L-threonyl-[protein] + ADP + H(+). This chain is Putative serine/threonine-protein kinase, found in Mycoplasma pneumoniae (strain ATCC 29342 / M129 / Subtype 1) (Mycoplasmoides pneumoniae).